The following is a 570-amino-acid chain: Sulfite reductase [NADPH] hemoprotein beta-component (570 aa).

4 residues coordinate [4Fe-4S] cluster: Cys-434, Cys-440, Cys-479, and Cys-483. Cys-483 is a siroheme binding site.

Belongs to the nitrite and sulfite reductase 4Fe-4S domain family. As to quaternary structure, alpha(8)-beta(8). The alpha component is a flavoprotein, the beta component is a hemoprotein. It depends on siroheme as a cofactor. Requires [4Fe-4S] cluster as cofactor.

The catalysed reaction is hydrogen sulfide + 3 NADP(+) + 3 H2O = sulfite + 3 NADPH + 4 H(+). It functions in the pathway sulfur metabolism; hydrogen sulfide biosynthesis; hydrogen sulfide from sulfite (NADPH route): step 1/1. Functionally, component of the sulfite reductase complex that catalyzes the 6-electron reduction of sulfite to sulfide. This is one of several activities required for the biosynthesis of L-cysteine from sulfate. The polypeptide is Sulfite reductase [NADPH] hemoprotein beta-component (Salmonella paratyphi B (strain ATCC BAA-1250 / SPB7)).